The chain runs to 368 residues: snRNA-activating protein complex subunit 1 (368 aa).

An SNAPC3-binding region spans residues Met-1–Val-168. The SNAPC4-binding stretch occupies residues Pro-164 to Lys-268. Disordered stretches follow at residues Gln-224 to Glu-257 and Gln-275 to His-368. Basic and acidic residues predominate over residues Lys-238–Glu-257. 2 positions are modified to phosphoserine: Ser-289 and Ser-290.

Part of the SNAPc complex composed of 5 subunits: SNAPC1, SNAPC2, SNAPC3, SNAPC4 and SNAPC5. SNAPC1 interacts with SNAPC3, SNAPC4 and TBP.

Its subcellular location is the nucleus. Its function is as follows. Part of the SNAPc complex required for the transcription of both RNA polymerase II and III small-nuclear RNA genes. Binds to the proximal sequence element (PSE), a non-TATA-box basal promoter element common to these 2 types of genes. Recruits TBP and BRF2 to the U6 snRNA TATA box. The sequence is that of snRNA-activating protein complex subunit 1 (SNAPC1) from Homo sapiens (Human).